Consider the following 397-residue polypeptide: Phosphoglycerate kinase (397 aa).

Substrate is bound by residues 21-23 (DMN), Arg36, 59-62 (HLGR), Arg114, and Arg147. ATP is bound by residues Lys198, Glu320, and 346–349 (GGDT).

This sequence belongs to the phosphoglycerate kinase family. As to quaternary structure, monomer.

The protein resides in the cytoplasm. The enzyme catalyses (2R)-3-phosphoglycerate + ATP = (2R)-3-phospho-glyceroyl phosphate + ADP. Its pathway is carbohydrate degradation; glycolysis; pyruvate from D-glyceraldehyde 3-phosphate: step 2/5. The chain is Phosphoglycerate kinase from Neisseria gonorrhoeae (strain NCCP11945).